The following is a 237-amino-acid chain: tRNA(His) guanylyltransferase (237 aa).

At Ala-2 the chain carries N-acetylalanine. Residues Asp-29 and Gly-30 each contribute to the Mg(2+) site. 5 residues coordinate GTP: Lys-32, Phe-33, His-34, Lys-44, and Asp-47. Position 77 (Asp-77) interacts with Mg(2+).

The protein belongs to the tRNA(His) guanylyltransferase family. Homotetramer. The cofactor is Mg(2+).

The enzyme catalyses a 5'-end ribonucleotide-tRNA(His) + GTP + ATP + H2O = a 5'-end phospho-guanosine-ribonucleotide-tRNA(His) + AMP + 2 diphosphate + H(+). The catalysed reaction is a 5'-end ribonucleotide-RNA + a ribonucleoside 5'-triphosphate + ATP + H2O = a 5'-end phospho-ribonucleoside-ribonucleotide-RNA + AMP + 2 diphosphate + H(+). Its function is as follows. Acts as a tRNA(His) guanylyltransferase that catalyzes 3'-5' addition of a single guanosine residue to the -1 position of tRNA(His), to form a non-Watson-Crick G(-1):A-73 base pair. After addition of G(-1), THG1 removes pyrophosphate from the tRNA 5'-end, generating 5'-monophosphorylated G(-1)-containing tRNA which is important for recognition of tRNA(His) by its cognate histidyl-tRNA synthetase. In addition to the single-G(-1) addition reaction, THG1 polymerizes multiple G residues to the 5'-end of tRNA(His) variants using the 3'-end of the tRNA(His) acceptor stem as a template. The chain is tRNA(His) guanylyltransferase from Saccharomyces cerevisiae (strain ATCC 204508 / S288c) (Baker's yeast).